A 132-amino-acid chain; its full sequence is Ribosome-binding factor A (132 aa).

The tract at residues 113–132 (EANSTRAKDDDEADAPAKDD) is disordered.

The protein belongs to the RbfA family. As to quaternary structure, monomer. Binds 30S ribosomal subunits, but not 50S ribosomal subunits or 70S ribosomes.

The protein resides in the cytoplasm. Its function is as follows. One of several proteins that assist in the late maturation steps of the functional core of the 30S ribosomal subunit. Associates with free 30S ribosomal subunits (but not with 30S subunits that are part of 70S ribosomes or polysomes). Required for efficient processing of 16S rRNA. May interact with the 5'-terminal helix region of 16S rRNA. This is Ribosome-binding factor A from Burkholderia ambifaria (strain MC40-6).